The primary structure comprises 96 residues: Co-chaperonin GroES (96 aa).

This sequence belongs to the GroES chaperonin family. As to quaternary structure, heptamer of 7 subunits arranged in a ring. Interacts with the chaperonin GroEL.

It localises to the cytoplasm. Functionally, together with the chaperonin GroEL, plays an essential role in assisting protein folding. The GroEL-GroES system forms a nano-cage that allows encapsulation of the non-native substrate proteins and provides a physical environment optimized to promote and accelerate protein folding. GroES binds to the apical surface of the GroEL ring, thereby capping the opening of the GroEL channel. This chain is Co-chaperonin GroES, found in Hydrogenobaculum sp. (strain Y04AAS1).